A 441-amino-acid polypeptide reads, in one-letter code: Signal recognition particle 54 kDa protein (441 aa).

GTP-binding positions include 104–111 (GLQGSGKT), 186–190 (DTAGR), and 244–247 (TKLD).

It belongs to the GTP-binding SRP family. SRP54 subfamily. As to quaternary structure, part of the signal recognition particle protein translocation system, which is composed of SRP and FtsY. Archaeal SRP consists of a 7S RNA molecule of 300 nucleotides and two protein subunits: SRP54 and SRP19.

The protein localises to the cytoplasm. The enzyme catalyses GTP + H2O = GDP + phosphate + H(+). In terms of biological role, involved in targeting and insertion of nascent membrane proteins into the cytoplasmic membrane. Binds to the hydrophobic signal sequence of the ribosome-nascent chain (RNC) as it emerges from the ribosomes. The SRP-RNC complex is then targeted to the cytoplasmic membrane where it interacts with the SRP receptor FtsY. In Staphylothermus marinus (strain ATCC 43588 / DSM 3639 / JCM 9404 / F1), this protein is Signal recognition particle 54 kDa protein.